A 492-amino-acid chain; its full sequence is N-succinylglutamate 5-semialdehyde dehydrogenase (492 aa).

220–225 is an NAD(+) binding site; that stretch reads GSASTG. Catalysis depends on residues E243 and C277.

The protein belongs to the aldehyde dehydrogenase family. AstD subfamily.

The enzyme catalyses N-succinyl-L-glutamate 5-semialdehyde + NAD(+) + H2O = N-succinyl-L-glutamate + NADH + 2 H(+). It participates in amino-acid degradation; L-arginine degradation via AST pathway; L-glutamate and succinate from L-arginine: step 4/5. In terms of biological role, catalyzes the NAD-dependent reduction of succinylglutamate semialdehyde into succinylglutamate. The sequence is that of N-succinylglutamate 5-semialdehyde dehydrogenase from Salmonella paratyphi B (strain ATCC BAA-1250 / SPB7).